We begin with the raw amino-acid sequence, 321 residues long: Torsin-2A (321 aa).

An N-terminal signal peptide occupies residues Met-1 to Ala-26. Gly-93–Ser-100 is an ATP binding site. Asn-149 carries N-linked (GlcNAc...) asparagine glycosylation.

The protein belongs to the ClpA/ClpB family. Torsin subfamily. In terms of assembly, homohexamer. Interacts with TOR1AIP1. In terms of processing, N-glycosylated. Expressed at similar levels in liver, muscle and brain (at protein level).

It localises to the endoplasmic reticulum lumen. This Mus musculus (Mouse) protein is Torsin-2A (Tor2a).